The sequence spans 131 residues: Large ribosomal subunit protein bL12 (131 aa).

The protein belongs to the bacterial ribosomal protein bL12 family. Homodimer. Part of the ribosomal stalk of the 50S ribosomal subunit. Forms a multimeric L10(L12)X complex, where L10 forms an elongated spine to which 2 to 4 L12 dimers bind in a sequential fashion. Binds GTP-bound translation factors.

Functionally, forms part of the ribosomal stalk which helps the ribosome interact with GTP-bound translation factors. Is thus essential for accurate translation. The protein is Large ribosomal subunit protein bL12 of Prochlorococcus marinus (strain MIT 9313).